We begin with the raw amino-acid sequence, 165 residues long: MATETNKELFVGGFAKILKEQRQVDVRLKAGDSGDEGASTSAHKLVLSARSEVFKKMLESDEIKASAQLETITLCEMKHEELEAFIEFIYSDGSMLSAKEKQHVRSLYIAGDKYEIPHLRDLCRIELISSLKSSNALDILELAQIPFDKALHDSAFFFFFFFFFG.

Positions valine 24 to alanine 98 constitute a BTB domain.

The protein operates within protein modification; protein ubiquitination. May act as a substrate-specific adapter of an E3 ubiquitin-protein ligase complex (CUL3-RBX1-BTB) which mediates the ubiquitination and subsequent proteasomal degradation of target proteins. The chain is Putative BTB/POZ domain-containing protein At2g40440 from Arabidopsis thaliana (Mouse-ear cress).